A 477-amino-acid polypeptide reads, in one-letter code: Bifunctional protein HldE (477 aa).

Residues 1–318 are ribokinase; sequence MKVNLPAFER…ENAVRGRADT (318 aa). 195–198 lines the ATP pocket; sequence NLSE. The active site involves D264. The interval 344–477 is cytidylyltransferase; it reads MTNGVFDILH…IKKIQTESEK (134 aa).

This sequence in the N-terminal section; belongs to the carbohydrate kinase PfkB family. It in the C-terminal section; belongs to the cytidylyltransferase family. Homodimer.

The catalysed reaction is D-glycero-beta-D-manno-heptose 7-phosphate + ATP = D-glycero-beta-D-manno-heptose 1,7-bisphosphate + ADP + H(+). It carries out the reaction D-glycero-beta-D-manno-heptose 1-phosphate + ATP + H(+) = ADP-D-glycero-beta-D-manno-heptose + diphosphate. It participates in nucleotide-sugar biosynthesis; ADP-L-glycero-beta-D-manno-heptose biosynthesis; ADP-L-glycero-beta-D-manno-heptose from D-glycero-beta-D-manno-heptose 7-phosphate: step 1/4. The protein operates within nucleotide-sugar biosynthesis; ADP-L-glycero-beta-D-manno-heptose biosynthesis; ADP-L-glycero-beta-D-manno-heptose from D-glycero-beta-D-manno-heptose 7-phosphate: step 3/4. Functionally, catalyzes the phosphorylation of D-glycero-D-manno-heptose 7-phosphate at the C-1 position to selectively form D-glycero-beta-D-manno-heptose-1,7-bisphosphate. Its function is as follows. Catalyzes the ADP transfer from ATP to D-glycero-beta-D-manno-heptose 1-phosphate, yielding ADP-D-glycero-beta-D-manno-heptose. This Salmonella paratyphi A (strain ATCC 9150 / SARB42) protein is Bifunctional protein HldE.